The primary structure comprises 420 residues: Pre-mRNA-splicing factor RBM22 (420 aa).

Residues arginine 159–proline 186 form a C3H1-type zinc finger. The 74-residue stretch at threonine 232 to serine 305 folds into the RRM domain. Disordered regions lie at residues glycine 303 to glutamate 343 and alanine 372 to proline 420. Positions arginine 309–threonine 318 are enriched in basic and acidic residues.

Belongs to the SLT11 family. Component of the pre-catalytic and catalytic spliceosome complexes. Component of the postcatalytic spliceosome P complex.

The protein localises to the nucleus. Its subcellular location is the cytoplasm. Functionally, required for pre-mRNA splicing as component of the activated spliceosome. Involved in the first step of pre-mRNA splicing. Binds directly to the internal stem-loop (ISL) domain of the U6 snRNA and to the pre-mRNA intron near the 5' splice site during the activation and catalytic phases of the spliceosome cycle. This is Pre-mRNA-splicing factor RBM22 (RBM22) from Gallus gallus (Chicken).